Here is a 461-residue protein sequence, read N- to C-terminus: Serine carboxypeptidase-like 51 (461 aa).

An N-terminal signal peptide occupies residues 1-20; that stretch reads MKTTVVYLVILCLIVSCTNG. Asn-99 and Asn-152 each carry an N-linked (GlcNAc...) asparagine glycan. Ser-166 is a catalytic residue. N-linked (GlcNAc...) asparagine glycosylation occurs at Asn-340. Active-site residues include Asp-379 and His-438.

The protein belongs to the peptidase S10 family. As to expression, expressed in seedlings, roots, flowers and siliques.

The protein localises to the secreted. Its function is as follows. Probable carboxypeptidase. The protein is Serine carboxypeptidase-like 51 (SCPL51) of Arabidopsis thaliana (Mouse-ear cress).